The chain runs to 435 residues: Citrate synthase (435 aa).

Residues His-311 and Asp-370 contribute to the active site.

Belongs to the citrate synthase family. Homohexamer.

The enzyme catalyses oxaloacetate + acetyl-CoA + H2O = citrate + CoA + H(+). Its pathway is carbohydrate metabolism; tricarboxylic acid cycle; isocitrate from oxaloacetate: step 1/2. This chain is Citrate synthase (gltA), found in Rickettsia africae (strain ESF-5).